Reading from the N-terminus, the 545-residue chain is Glucans biosynthesis protein G (545 aa).

An N-terminal signal peptide occupies residues 1–34 (MVSLLRCQSFKPSSSLICSLALSAAFALSSSAFA). The tract at residues 38–60 (KPAENKPATPVVSPPKATAQPAN) is disordered.

The protein belongs to the OpgD/OpgG family.

The protein resides in the periplasm. It functions in the pathway glycan metabolism; osmoregulated periplasmic glucan (OPG) biosynthesis. Involved in the biosynthesis of osmoregulated periplasmic glucans (OPGs). In Shewanella sp. (strain MR-7), this protein is Glucans biosynthesis protein G.